Reading from the N-terminus, the 2038-residue chain is MLRVVVESASINPPLSTTPKAFVTVYFRDMMKRTRVEEGHDPIWNETLIWHLWNQPLENDSFLKVILQDSVSKKKERFIGLATVPLKRLAQRPKEVMFVRDLILLNHSMKPTNCTVTLHVAQIYDQDTEMTGNEELLGSTVNEVTQKKLMVSGLPMHRALASKPQHFQVRVKVFEARQLLGNNIKPVVKVNIADQQHLTRIKMGNNPFFNEIFFQNFHEVPAKFFEENISIEVVDSAASRSKAEIGRFQTDIGFIYHSPGHTLLRKWLGLCQRNKTTSGVRGYLKVTICALGVGDQALVDQKLPYEQNTRVQIFKSKEVPVSLAYLQFFIYCAEDLHFGTHKSATPVLEVELIGDKLRTKPQNPSDNPIWNQILTFQIQLPCLSSYIKFRVMDCSKYKCQDEIGSASLCLSQISSTGEEIQGMYSGFLPCFGPSFLTLRGGKKPPFRTSEEGTCIMDAVQHGLAYRGRIFVEIVTKIKSQQDSVMKDLSQEVTQVEMQYYRQKYGLCVIFLSCTMMPKFKDLIQFEVSMGHYGNKTDPNYKPLVSTTQYSPVIYDGTTYHYVPWYNTKPVVAVTSNWEDVGFRMNCLNLLHITRDRLKTNLDILKSIRNPRDPALLQQWEKLLKELQEDCRRPLPCMTDQPRANSLDRNKWQLRSQLLQQLAQMAKEAKPVNMVGTAKEWLHRLNAVIPEPQESLPDVLIWLMSRQQRVAYARVPAHTVLFSPAGPLSSGKFCGKIQNILLQYPEGEGQDTFPASLRVCMWLGNVKYSKNLKLLQQGSMVVYAETYENQAKTRDDWGQQGLYHCPNFSDVMGRKALPKTDFKAPPGWHWKDDWVVEPQRRLLLDIDINKSQVLEEVYENQLRNATGAWVPAAIPNTDVNGQPVEALENVKCPQGWHFKKNWIVKLNHAVDSEGWEYGVGIPPSGLPQIWNSVEKTYHSCRRRRWVRVRFRNHKELGQERSQEQETLSFLQMQDLSEEGKEGWEYGTFDSRFHLDPQPTSRFRRRCWHRQLAPNKDRGVASIFLLEGSLAVEQKDQPRKEMEKTRSWQPWKDLRHTPEDPRIPTTPFIYYILNKPHYYQLFCYIYQARNLMYNQILTFQEPFIQVVFLNHSLCTQTLRSSAAPTWSQSIIFQHLLLFEDPKDTRENPPLVVLELWQHDSRGNKILWGRSMWPPVVWLGLQDWVFTPLRWHPLVRELGEEEGEILASCELILETQKLKELHPPILSIPCKDGIYLLPKNIQPTMKMMAIEIMAWGLRNMTKVRYPQLLLECGGESLKTEPISNFQENPNFPTSTFFFTVFMPLEETHAQPLVVKVVDNQEYGQQIVVGQANIDFLQPYFCDPWSLNYTTVKLPTLSVKKPDTFLDFVYKKFWFDSSKDEEVYEEEVDWWSKLFWATGDADKSLNYNHKSYHTLKVYDCELEAVLTFKGLQDFCQTFKLYQEKPKVDSPVVGEFKGLFRIYPFPEDPEAPKPPRQFSAWPEIEDFPQMCLVRVYLIRAINLQPQDYNGLCDPYVILKLGQTKLGSRDSYYPNTLDPIFGMMYELTCNIPLEKDLEIQLFDFDLITADDEIGSTVIDLENRLLSGFGARCGLSKSYCKSGPFKWRDQMTPSYLLYRYAKQKGLPPPVFDLEGDSLYYNGETFKLQSFESAPPTYKHLGPKKERLALYILNTQGLVPEHVETRTLHSNSQPGIDQGKIQMWVDIFPKMLGPPGPQVNISPRKPKRYQLRCIIWSTAEVDLVQETFSKEKMSDIYVKGWLFGLEEDTQKTDVHYHSLTGEATFNWRFIFTMDYLTTERACVQSQKDYIWSLDPTSTKFPARLMIQIWDNDFFSPDDFLGVLELDLSDMPLPAQNIKQCSLKMMETDSKWPFTPQKRISLFKKTNVTGWWPCQVLDGDKWRLSGKVKMTLEMLSEREALIRPAGRGQSEPNQFPMLHPPERNDSFLLWYQSPIKNFCYAVCKRYRSKIICLVVTLVIGFILLNFVYSAPSYFAMNWIKPQLRLSSPIKIVNLIGTVNTSNINSSILTMEGSTYHASHVFPEAPAP.

C2 domains follow at residues 1-100 (MLRV…MFVR), 145-265 (TQKK…TLLR), 307-424 (QNTR…QGMY), 1055-1186 (TPED…FTPL), 1225-1345 (IPCK…SLNY), 1467-1587 (PKPP…ARCG), and 1705-1853 (GPPG…KQCS). Ca(2+)-binding residues include aspartate 1502, aspartate 1508, aspartate 1557, phenylalanine 1558, aspartate 1559, aspartate 1565, aspartate 1824, serine 1827, and aspartate 1830. The chain crosses the membrane as a helical span at residues 1961-1981 (IICLVVTLVIGFILLNFVYSA).

It belongs to the ferlin family. In terms of assembly, interacts (via second C2 domain) with EHD1 and EHD2. The cofactor is Ca(2+). In terms of tissue distribution, expressed in differentiating myoblasts and myotubes.

It localises to the cell membrane. It is found in the membrane. Its function is as follows. Plays a role in myoblast fusion; probable mediator of endocytic recycling for membrane trafficking events during myotube formation. This chain is Fer-1-like protein 5 (Fer1l5), found in Mus musculus (Mouse).